The following is a 206-amino-acid chain: Uridine kinase (206 aa).

11 to 18 (GGTGSGKS) contacts ATP.

The protein belongs to the uridine kinase family.

The protein resides in the cytoplasm. The catalysed reaction is uridine + ATP = UMP + ADP + H(+). It carries out the reaction cytidine + ATP = CMP + ADP + H(+). It participates in pyrimidine metabolism; CTP biosynthesis via salvage pathway; CTP from cytidine: step 1/3. The protein operates within pyrimidine metabolism; UMP biosynthesis via salvage pathway; UMP from uridine: step 1/1. This Clostridium botulinum (strain Langeland / NCTC 10281 / Type F) protein is Uridine kinase.